Here is a 556-residue protein sequence, read N- to C-terminus: DNA ligase B (556 aa).

K122 acts as the N6-AMP-lysine intermediate in catalysis.

This sequence belongs to the NAD-dependent DNA ligase family. LigB subfamily.

The enzyme catalyses NAD(+) + (deoxyribonucleotide)n-3'-hydroxyl + 5'-phospho-(deoxyribonucleotide)m = (deoxyribonucleotide)n+m + AMP + beta-nicotinamide D-nucleotide.. Functionally, catalyzes the formation of phosphodiester linkages between 5'-phosphoryl and 3'-hydroxyl groups in double-stranded DNA using NAD as a coenzyme and as the energy source for the reaction. This is DNA ligase B from Enterobacter sp. (strain 638).